We begin with the raw amino-acid sequence, 205 residues long: Urease accessory protein UreG (205 aa).

14 to 21 (GPVGSGKT) contributes to the GTP binding site.

This sequence belongs to the SIMIBI class G3E GTPase family. UreG subfamily. Homodimer. UreD, UreF and UreG form a complex that acts as a GTP-hydrolysis-dependent molecular chaperone, activating the urease apoprotein by helping to assemble the nickel containing metallocenter of UreC. The UreE protein probably delivers the nickel.

Its subcellular location is the cytoplasm. In terms of biological role, facilitates the functional incorporation of the urease nickel metallocenter. This process requires GTP hydrolysis, probably effectuated by UreG. This is Urease accessory protein UreG from Escherichia coli.